Here is a 324-residue protein sequence, read N- to C-terminus: Beta-ketoacyl-[acyl-carrier-protein] synthase III (324 aa).

Residues cysteine 112 and histidine 249 contribute to the active site. The segment at 250–254 (QANRR) is ACP-binding. Asparagine 279 is a catalytic residue.

The protein belongs to the thiolase-like superfamily. FabH family. As to quaternary structure, homodimer.

The protein localises to the cytoplasm. The catalysed reaction is malonyl-[ACP] + acetyl-CoA + H(+) = 3-oxobutanoyl-[ACP] + CO2 + CoA. Its pathway is lipid metabolism; fatty acid biosynthesis. In terms of biological role, catalyzes the condensation reaction of fatty acid synthesis by the addition to an acyl acceptor of two carbons from malonyl-ACP. Catalyzes the first condensation reaction which initiates fatty acid synthesis and may therefore play a role in governing the total rate of fatty acid production. Possesses both acetoacetyl-ACP synthase and acetyl transacylase activities. Its substrate specificity determines the biosynthesis of branched-chain and/or straight-chain of fatty acids. The protein is Beta-ketoacyl-[acyl-carrier-protein] synthase III of Streptococcus pyogenes serotype M1.